The sequence spans 426 residues: Trigger factor (426 aa).

One can recognise a PPIase FKBP-type domain in the interval 165–239 (GDVYKLNEAG…ISEIKRLELP (75 aa)).

The protein belongs to the FKBP-type PPIase family. Tig subfamily.

The protein localises to the cytoplasm. The enzyme catalyses [protein]-peptidylproline (omega=180) = [protein]-peptidylproline (omega=0). Its function is as follows. Involved in protein export. Acts as a chaperone by maintaining the newly synthesized protein in an open conformation. Functions as a peptidyl-prolyl cis-trans isomerase. This Pelodictyon phaeoclathratiforme (strain DSM 5477 / BU-1) protein is Trigger factor.